Consider the following 459-residue polypeptide: Mycothione reductase (459 aa).

31–39 contacts FAD; it reads EQGTFGGTC. A disulfide bond links Cys-39 and Cys-44. His-444 functions as the Proton acceptor in the catalytic mechanism.

This sequence belongs to the class-I pyridine nucleotide-disulfide oxidoreductase family. Homodimer. FAD serves as cofactor.

It carries out the reaction 2 mycothiol + NADP(+) = mycothione + NADPH + H(+). The catalysed reaction is 2 mycothiol + NAD(+) = mycothione + NADH + H(+). In terms of biological role, catalyzes the NAD(P)H-dependent reduction of mycothione (the oxidized disulfide form of mycothiol) to mycothiol. In Mycobacterium tuberculosis (strain CDC 1551 / Oshkosh), this protein is Mycothione reductase (mtr).